Here is a 199-residue protein sequence, read N- to C-terminus: Large ribosomal subunit protein uL4 (199 aa).

It belongs to the universal ribosomal protein uL4 family. Part of the 50S ribosomal subunit.

One of the primary rRNA binding proteins, this protein initially binds near the 5'-end of the 23S rRNA. It is important during the early stages of 50S assembly. It makes multiple contacts with different domains of the 23S rRNA in the assembled 50S subunit and ribosome. Functionally, forms part of the polypeptide exit tunnel. This chain is Large ribosomal subunit protein uL4, found in Aquifex aeolicus (strain VF5).